A 374-amino-acid polypeptide reads, in one-letter code: Homoserine O-succinyltransferase (374 aa).

The 311-residue stretch at 47-357 folds into the AB hydrolase-1 domain; sequence NAILVCHALS…NFGHDSFLME (311 aa). Residue S153 is the Nucleophile of the active site. R223 serves as a coordination point for substrate. Active-site residues include D318 and H351. D352 serves as a coordination point for substrate.

Belongs to the AB hydrolase superfamily. MetX family. As to quaternary structure, homodimer.

It is found in the cytoplasm. The enzyme catalyses L-homoserine + succinyl-CoA = O-succinyl-L-homoserine + CoA. It participates in amino-acid biosynthesis; L-methionine biosynthesis via de novo pathway; O-succinyl-L-homoserine from L-homoserine: step 1/1. Functionally, transfers a succinyl group from succinyl-CoA to L-homoserine, forming succinyl-L-homoserine. The chain is Homoserine O-succinyltransferase from Dechloromonas aromatica (strain RCB).